Here is a 199-residue protein sequence, read N- to C-terminus: Large ribosomal subunit protein bL25 (199 aa).

This sequence belongs to the bacterial ribosomal protein bL25 family. CTC subfamily. Part of the 50S ribosomal subunit; part of the 5S rRNA/L5/L18/L25 subcomplex. Contacts the 5S rRNA. Binds to the 5S rRNA independently of L5 and L18.

Functionally, this is one of the proteins that binds to the 5S RNA in the ribosome where it forms part of the central protuberance. The polypeptide is Large ribosomal subunit protein bL25 (Caulobacter sp. (strain K31)).